Here is a 143-residue protein sequence, read N- to C-terminus: NADH-quinone oxidoreductase subunit A (143 aa).

3 helical membrane-spanning segments follow: residues Phe-8 to Thr-28, Phe-63 to Trp-83, and Phe-93 to Trp-113.

This sequence belongs to the complex I subunit 3 family. NDH-1 is composed of 14 different subunits. Subunits NuoA, H, J, K, L, M, N constitute the membrane sector of the complex.

Its subcellular location is the cell inner membrane. The enzyme catalyses a quinone + NADH + 5 H(+)(in) = a quinol + NAD(+) + 4 H(+)(out). In terms of biological role, NDH-1 shuttles electrons from NADH, via FMN and iron-sulfur (Fe-S) centers, to quinones in the respiratory chain. The immediate electron acceptor for the enzyme in this species is believed to be a menaquinone. Couples the redox reaction to proton translocation (for every two electrons transferred, four hydrogen ions are translocated across the cytoplasmic membrane), and thus conserves the redox energy in a proton gradient. The protein is NADH-quinone oxidoreductase subunit A of Pelodictyon phaeoclathratiforme (strain DSM 5477 / BU-1).